A 397-amino-acid chain; its full sequence is MEMNKVLHQDLVQATRRILKLGPSELRVTDAGLICKNPNYSVCDAMLKTDTVYCVEYLLSYWESRTDHVPCFIFKNTGCAVSLCCFVRAPVKLVSPARHVGEFNVLKVNESLIVTLKDIEEIKPSAYGVLTKCVVRKSNSASVFNIELIAFGPENEGEYENLLRELYAKKAASTSLAVRNHVTVSSHSGSGPSLWRARMSAALTRTAGKRSSRTASPPPPPRHPSCSPTMVAAGGAAAGPRPPPPPMAAGSWRLCRCEACMGRCGCASEGDADEEEEELLALAGEGKAAAAAAGQDVGGSARRPLEEHVSRRRGVSTHHRHPPSPPCAPSLERTGYRWAPSSWWRARSGPSRPQSGPWLPARFATLGPLVLALLLVLALLWRGHGQSSSPTRSAHRD.

Residues 1–358 lie on the Perinuclear space side of the membrane; it reads MEMNKVLHQD…GPSRPQSGPW (358 aa). 2 disordered regions span residues 205-245 and 291-332; these read RTAG…PPPP and AAAG…PSLE. Ser216 is subject to Phosphoserine. Composition is skewed to low complexity over residues 224–239 and 291–301; these read PSCS…AAAG and AAAGQDVGGSA. A compositionally biased stretch (basic residues) spans 310–322; sequence SRRRGVSTHHRHP. The chain crosses the membrane as a helical span at residues 359 to 381; sequence LPARFATLGPLVLALLLVLALLW. Topologically, residues 382–397 are nuclear; it reads RGHGQSSSPTRSAHRD.

This sequence belongs to the herpesviridae NEC2 protein family. Forms a heterohexameric complex with NEC1. Interacts with host UBA7 and RNF170; this interaction promotes UBA7 proteasomal degradation. Phosphorylated. Phosphorylation by viral kinase UL97 at Ser-216 plays an important role for correct viral nuclear egress complex (NEC) localization.

It is found in the host nucleus inner membrane. Its function is as follows. Plays an essential role in virion nuclear egress, the first step of virion release from infected cell. Within the host nucleus, NEC1 interacts with the newly formed capsid through the vertexes and directs it to the inner nuclear membrane by associating with NEC2. Induces the budding of the capsid at the inner nuclear membrane as well as its envelopment into the perinuclear space. There, the NEC1/NEC2 complex promotes the fusion of the enveloped capsid with the outer nuclear membrane and the subsequent release of the viral capsid into the cytoplasm where it will reach the secondary budding sites in the host Golgi or trans-Golgi network. Inhibits host ISGylation and subsequent innate antiviral response by targeting host UBA7 for proteasomal degradation. The chain is Nuclear egress protein 2 from Human cytomegalovirus (strain AD169) (HHV-5).